The following is an 80-amino-acid chain: Defensin-like protein 16 (80 aa).

Positions Met-1 to Ala-29 are cleaved as a signal peptide. Residue Gln-30 is modified to Pyrrolidone carboxylic acid. 4 disulfide bridges follow: Cys-33–Cys-80, Cys-44–Cys-65, Cys-50–Cys-74, and Cys-54–Cys-76.

It belongs to the DEFL family. Predominantly expressed in leaves.

Its subcellular location is the secreted. Its function is as follows. Confers broad-spectrum resistance to pathogens. Has antifungal activity in vitro. The polypeptide is Defensin-like protein 16 (PDF1.2A) (Arabidopsis thaliana (Mouse-ear cress)).